Reading from the N-terminus, the 321-residue chain is uncharacterized protein (321 aa).

Residues 157 to 220 are disordered; the sequence is TLEQPIEEDF…EGAEEDSHEH (64 aa). The span at 161-214 shows a compositional bias: acidic residues; it reads PIEEDFDEQDENDQNERDEDDAEEQEEDEVEEEEEEQQEEEEGENDEELTEGAE. Residues 167-212 adopt a coiled-coil conformation; it reads DEQDENDQNERDEDDAEEQEEDEVEEEEEEQQEEEEGENDEELTEG.

This is an uncharacterized protein from Dictyostelium discoideum (Social amoeba).